The chain runs to 815 residues: Tubulin polyglutamylase TTLL13 (815 aa).

In terms of domain architecture, TTL spans 85–430 (RRSLAINLTN…RGCDKRKVME (346 aa)). ATP-binding positions include lysine 202, 208–209 (QG), 230–233 (QQYI), and 243–245 (KFD). Glutamine 208 lines the a protein pocket. Residue arginine 269 participates in L-glutamate binding. 291-292 (TN) contributes to the ATP binding site. Tyrosine 293 and lysine 311 together coordinate L-glutamate. The Mg(2+) site is built by aspartate 376, glutamate 389, and asparagine 391. A c-MTBD region region spans residues 401–482 (CLDQEVKDAL…LGKYRRIYPG (82 aa)). Lysine 407 serves as a coordination point for L-glutamate. The stretch at 504-528 (ASKAREECARQQLEEIRLKQEQQET) forms a coiled coil. The disordered stretch occupies residues 520 to 556 (RLKQEQQETSGTKRQKARDQNQGESAGEKSRPRAGLQ). Positions 536 to 550 (ARDQNQGESAGEKSR) are enriched in basic and acidic residues.

It belongs to the tubulin--tyrosine ligase family. It depends on Mg(2+) as a cofactor.

The catalysed reaction is (L-glutamyl)(n)-gamma-L-glutamyl-L-glutamyl-[protein] + L-glutamate + ATP = (L-glutamyl)(n+1)-gamma-L-glutamyl-L-glutamyl-[protein] + ADP + phosphate + H(+). Polyglutamylase which modifies tubulin, generating polyglutamate side chains of variable lengths on the gamma-carboxyl group of specific glutamate residues within the C-terminal tail of tubulin. Mediates ATP-dependent polyglutamate side-chain elongation of the polyglutamylation reaction but not the initiation step. Preferentially modifies the alpha-tubulin tail over a beta-tail. The protein is Tubulin polyglutamylase TTLL13 of Homo sapiens (Human).